Reading from the N-terminus, the 133-residue chain is Snaclec echicetin subunit alpha (133 aa).

3 disulfides stabilise this stretch: Cys4/Cys15, Cys31/Cys127, and Cys102/Cys119. Residues 11–128 (YEGHCYQLFR…CEFKFPFVCK (118 aa)) form the C-type lectin domain.

It belongs to the snaclec family. Heterodimer of subunits alpha and beta; disulfide-linked. Forms an active complex with the pentameric immunoglobuline Mkappa (IgMkappa). Expressed by the venom gland.

The protein resides in the secreted. Echicetin itself inhibits aggregation of washed platelets induced by vWF, thrombin or alboaggregin-A. However, when complexed with the pentameric plasma immunoglobulin Mkappa (IgMkappa), echicetin binds specifically to GPIb and activates platelets. This is caused by P-selectin expression and activation of alpha-IIb/beta-3 as well as tyrosine phosphorylation of several signal transduction molecules, including p53/56(LYN), p64, p72(SYK), p70 to p90, and p120. In vivo, it induces thrombocytopenia when injected into mice, probably accounting of activation of platelets rather than inhibition. This Echis carinatus sochureki (Saw-scaled viper) protein is Snaclec echicetin subunit alpha.